A 218-amino-acid polypeptide reads, in one-letter code: Dual specificity protein phosphatase TpbA (218 aa).

The first 28 residues, Met1–Ala28, serve as a signal peptide directing secretion. In terms of domain architecture, Tyrosine-protein phosphatase spans Asp44 to Leu188. The active-site Proton donor/acceptor is Asp105. Cys132 (phosphocysteine intermediate) is an active-site residue.

The protein belongs to the protein-tyrosine phosphatase family. In terms of assembly, monomer in solution.

It localises to the periplasm. It carries out the reaction O-phospho-L-tyrosyl-[protein] + H2O = L-tyrosyl-[protein] + phosphate. It catalyses the reaction O-phospho-L-threonyl-[protein] + H2O = L-threonyl-[protein] + phosphate. The catalysed reaction is O-phospho-L-seryl-[protein] + H2O = L-seryl-[protein] + phosphate. The phosphatase activity is completely inhibited by trisodium orthovanadate, a tyrosine phosphatase specific inhibitor. In terms of biological role, phosphatase that regulates diverse phenotypes in P.aeruginosa via regulation of the concentration of cellular c-di-GMP. Acts by dephosphorylating the membrane-anchored diguanylate cyclase TpbB at tyrosine and serine/threonine sites, leading to inactivation of TpbB and reduced c-di-GMP production. The reduced cellular c-di-GMP concentration leads to reduced adhesin expression, reduced extracellular polysaccharide (EPS) production, pellicule production, cell aggregation and biofilm formation, and enhanced swimming and swarming. It affects colony morphology and controls rugose colony formation. TpbA also acts as a positive regulator of extracellular DNA (eDNA, a major component of the biofilm matrix) and cell lysis by reducing c-di-GMP concentrations. In vitro shows phosphatase activity toward p-nitrophenyl phosphate (pNPP), tyrosine phosphopeptides and a threonine phosphopeptide. Does not have phosphodiesterases (PDE) activity, and cannot degrade c-di-GMP. In Pseudomonas aeruginosa (strain UCBPP-PA14), this protein is Dual specificity protein phosphatase TpbA.